The primary structure comprises 148 residues: Large ribosomal subunit protein uL16 (148 aa).

This sequence belongs to the universal ribosomal protein uL16 family. Part of the 50S ribosomal subunit.

In terms of biological role, binds 23S rRNA and is also seen to make contacts with the A and possibly P site tRNAs. In Gloeobacter violaceus (strain ATCC 29082 / PCC 7421), this protein is Large ribosomal subunit protein uL16.